The following is a 526-amino-acid chain: Peptide chain release factor 3 (526 aa).

Positions 8 to 277 (NKRRTFAIIS…GLTEWAPKPQ (270 aa)) constitute a tr-type G domain. GTP-binding positions include 17-24 (SHPDAGKT), 85-89 (DTPGH), and 139-142 (NKLD).

The protein belongs to the TRAFAC class translation factor GTPase superfamily. Classic translation factor GTPase family. PrfC subfamily.

The protein resides in the cytoplasm. In terms of biological role, increases the formation of ribosomal termination complexes and stimulates activities of RF-1 and RF-2. It binds guanine nucleotides and has strong preference for UGA stop codons. It may interact directly with the ribosome. The stimulation of RF-1 and RF-2 is significantly reduced by GTP and GDP, but not by GMP. The polypeptide is Peptide chain release factor 3 (Haemophilus ducreyi (strain 35000HP / ATCC 700724)).